We begin with the raw amino-acid sequence, 185 residues long: Threonylcarbamoyl-AMP synthase (185 aa).

The YrdC-like domain maps to 4 to 185; sequence SWRVQQAAQD…IATAQIVRAG (182 aa).

It belongs to the SUA5 family. TsaC subfamily.

The protein localises to the cytoplasm. It catalyses the reaction L-threonine + hydrogencarbonate + ATP = L-threonylcarbamoyladenylate + diphosphate + H2O. In terms of biological role, required for the formation of a threonylcarbamoyl group on adenosine at position 37 (t(6)A37) in tRNAs that read codons beginning with adenine. Catalyzes the conversion of L-threonine, HCO(3)(-)/CO(2) and ATP to give threonylcarbamoyl-AMP (TC-AMP) as the acyladenylate intermediate, with the release of diphosphate. This chain is Threonylcarbamoyl-AMP synthase, found in Pseudomonas syringae pv. syringae (strain B728a).